A 410-amino-acid polypeptide reads, in one-letter code: Cysteine desulfurase IscS (410 aa).

Pyridoxal 5'-phosphate is bound by residues 80 to 81 (AT), Asn160, Gln188, and 208 to 210 (SGH). Residue Lys211 is modified to N6-(pyridoxal phosphate)lysine. Residue Thr248 participates in pyridoxal 5'-phosphate binding. The active-site Cysteine persulfide intermediate is the Cys334. Residue Cys334 participates in [2Fe-2S] cluster binding.

The protein belongs to the class-V pyridoxal-phosphate-dependent aminotransferase family. NifS/IscS subfamily. Homodimer. Forms a heterotetramer with IscU, interacts with other sulfur acceptors. It depends on pyridoxal 5'-phosphate as a cofactor.

It is found in the cytoplasm. The enzyme catalyses (sulfur carrier)-H + L-cysteine = (sulfur carrier)-SH + L-alanine. Its pathway is cofactor biosynthesis; iron-sulfur cluster biosynthesis. Its function is as follows. Master enzyme that delivers sulfur to a number of partners involved in Fe-S cluster assembly, tRNA modification or cofactor biosynthesis. Catalyzes the removal of elemental sulfur atoms from cysteine to produce alanine. Functions as a sulfur delivery protein for Fe-S cluster synthesis onto IscU, an Fe-S scaffold assembly protein, as well as other S acceptor proteins. The sequence is that of Cysteine desulfurase IscS from Rickettsia conorii (strain ATCC VR-613 / Malish 7).